Consider the following 285-residue polypeptide: MERPIRHGAKTKQCRCLGTTELSMSQIDHQVHSIGPEVTGSRIFKFIAFLYGIAAYLVFFVTILYAIGFVMGLVVPKTIDTGTDTSTAEAVIINLLLMALFAVQHSVMARQRFKTWWTQFVSKPIERSTYVLFASLSLLLLFWQWRPLPTVIWEVEDPDLAVTLVTVSFAGWVLVFTSTFIINHFELFGLHQVTNHLVGKEATPPRFKTPLLYKFVRHPIYLGFIVAFWAAPVMTAGHLLFAAVTTIYIFVGIALEERDLIDLFGDEYRQYKQRVSMLIPWRRSV.

The next 5 membrane-spanning stretches (helical) occupy residues 55–75 (AYLV…GLVV), 88–108 (AEAV…HSVM), 132–152 (LFAS…PTVI), 162–182 (VTLV…TFII), and 224–244 (FIVA…FAAV).

Belongs to the nurim family.

The protein localises to the membrane. The enzyme catalyses methanethiol + S-adenosyl-L-methionine = dimethyl sulfide + S-adenosyl-L-homocysteine + H(+). Catalyzes the methylation of methanethiol (MeSH) to yield dimethylsulphide (DMS). This chain is Methanethiol S-methyltransferase 1, found in Bradyrhizobium diazoefficiens (strain JCM 10833 / BCRC 13528 / IAM 13628 / NBRC 14792 / USDA 110).